A 235-amino-acid polypeptide reads, in one-letter code: Transmembrane protein 215 (235 aa).

The next 2 membrane-spanning stretches (helical) occupy residues 12–32 and 40–60; these read LVVALVSVFLVFGFMFTVSGM and IPLLAIGPAICLPGIAAIALA. The tract at residues 99–158 is disordered; sequence SDLESGKGSSDELAKKAGLRGKPSLQGQGELPMASSITTPTPMEEGECQSPGQSGRREET.

It is found in the membrane. The chain is Transmembrane protein 215 (TMEM215) from Bos taurus (Bovine).